Consider the following 557-residue polypeptide: Dihydroxy-acid dehydratase (557 aa).

Residue aspartate 78 participates in Mg(2+) binding. Cysteine 119 is a [2Fe-2S] cluster binding site. Positions 120 and 121 each coordinate Mg(2+). The residue at position 121 (lysine 121) is an N6-carboxylysine. [2Fe-2S] cluster is bound at residue cysteine 191. Position 442 (glutamate 442) interacts with Mg(2+). The active-site Proton acceptor is serine 468.

This sequence belongs to the IlvD/Edd family. In terms of assembly, homodimer. [2Fe-2S] cluster is required as a cofactor. It depends on Mg(2+) as a cofactor.

It carries out the reaction (2R)-2,3-dihydroxy-3-methylbutanoate = 3-methyl-2-oxobutanoate + H2O. It catalyses the reaction (2R,3R)-2,3-dihydroxy-3-methylpentanoate = (S)-3-methyl-2-oxopentanoate + H2O. It functions in the pathway amino-acid biosynthesis; L-isoleucine biosynthesis; L-isoleucine from 2-oxobutanoate: step 3/4. Its pathway is amino-acid biosynthesis; L-valine biosynthesis; L-valine from pyruvate: step 3/4. Functions in the biosynthesis of branched-chain amino acids. Catalyzes the dehydration of (2R,3R)-2,3-dihydroxy-3-methylpentanoate (2,3-dihydroxy-3-methylvalerate) into 2-oxo-3-methylpentanoate (2-oxo-3-methylvalerate) and of (2R)-2,3-dihydroxy-3-methylbutanoate (2,3-dihydroxyisovalerate) into 2-oxo-3-methylbutanoate (2-oxoisovalerate), the penultimate precursor to L-isoleucine and L-valine, respectively. The protein is Dihydroxy-acid dehydratase of Syntrophobacter fumaroxidans (strain DSM 10017 / MPOB).